The following is a 345-amino-acid chain: Tetraacyldisaccharide 4'-kinase (345 aa).

ATP is bound at residue 51–58 (HVGGAGKT).

This sequence belongs to the LpxK family.

It carries out the reaction a lipid A disaccharide + ATP = a lipid IVA + ADP + H(+). The protein operates within glycolipid biosynthesis; lipid IV(A) biosynthesis; lipid IV(A) from (3R)-3-hydroxytetradecanoyl-[acyl-carrier-protein] and UDP-N-acetyl-alpha-D-glucosamine: step 6/6. In terms of biological role, transfers the gamma-phosphate of ATP to the 4'-position of a tetraacyldisaccharide 1-phosphate intermediate (termed DS-1-P) to form tetraacyldisaccharide 1,4'-bis-phosphate (lipid IVA). This chain is Tetraacyldisaccharide 4'-kinase, found in Bradyrhizobium sp. (strain BTAi1 / ATCC BAA-1182).